A 983-amino-acid chain; its full sequence is Chaperone protein ClpB3, mitochondrial (983 aa).

A mitochondrion-targeting transit peptide spans 1–87 (MSRATAVSRL…LFHPTQAARY (87 aa)). A Clp R domain is found at 97-240 (PGEFTEMAWE…KEAISAVRGS (144 aa)). Repeat stretches follow at residues 100 to 165 (FTEM…ISRQ) and 177 to 240 (IGSS…VRGS). An i region spans residues 255-503 (LEKYGIDMTE…KLKMEITSKP (249 aa)). 300–307 (GEPGVGKT) lines the ATP pocket. Residues 504–627 (IELDEVDREI…QQSGKSMLRE (124 aa)) are a coiled coil. An II region spans residues 629-820 (VTDVDIAEIV…VIIMTSNIGS (192 aa)). Residue 703-710 (GPTGVGKT) participates in ATP binding.

It belongs to the ClpA/ClpB family.

The protein localises to the mitochondrion. Molecular chaperone that may not be involved in heat stress response or tolerance. The protein is Chaperone protein ClpB3, mitochondrial (CLPB3) of Oryza sativa subsp. japonica (Rice).